A 325-amino-acid polypeptide reads, in one-letter code: Replication factor C small subunit (325 aa).

An ATP-binding site is contributed by 44–51; sequence GPPGTGKT.

This sequence belongs to the activator 1 small subunits family. RfcS subfamily. Heteromultimer composed of small subunits (RfcS) and large subunits (RfcL).

In terms of biological role, part of the RFC clamp loader complex which loads the PCNA sliding clamp onto DNA. The sequence is that of Replication factor C small subunit from Thermofilum pendens (strain DSM 2475 / Hrk 5).